Reading from the N-terminus, the 170-residue chain is Sec-independent protein translocase protein TatB (170 aa).

Residues 1 to 21 (MIDFGFDKIALIGAVALIVIG) traverse the membrane as a helical segment. Positions 69–170 (AARNVEQSVS…VARFRPPRPL (102 aa)) are disordered. Over residues 73–93 (VEQSVSSEVNRTSSEMNQAWE) the composition is skewed to polar residues. Over residues 128–137 (HPRKNWRLKR) the composition is skewed to basic residues.

The protein belongs to the TatB family. In terms of assembly, the Tat system comprises two distinct complexes: a TatABC complex, containing multiple copies of TatA, TatB and TatC subunits, and a separate TatA complex, containing only TatA subunits. Substrates initially bind to the TatABC complex, which probably triggers association of the separate TatA complex to form the active translocon.

It localises to the cell inner membrane. Part of the twin-arginine translocation (Tat) system that transports large folded proteins containing a characteristic twin-arginine motif in their signal peptide across membranes. Together with TatC, TatB is part of a receptor directly interacting with Tat signal peptides. TatB may form an oligomeric binding site that transiently accommodates folded Tat precursor proteins before their translocation. The chain is Sec-independent protein translocase protein TatB from Methylibium petroleiphilum (strain ATCC BAA-1232 / LMG 22953 / PM1).